The chain runs to 498 residues: Lysine--tRNA ligase (498 aa).

Glutamate 407 and glutamate 414 together coordinate Mg(2+).

Belongs to the class-II aminoacyl-tRNA synthetase family. In terms of assembly, homodimer. The cofactor is Mg(2+).

Its subcellular location is the cytoplasm. It catalyses the reaction tRNA(Lys) + L-lysine + ATP = L-lysyl-tRNA(Lys) + AMP + diphosphate. The polypeptide is Lysine--tRNA ligase (Rhizobium etli (strain CIAT 652)).